The primary structure comprises 359 residues: N-acetyl-gamma-glutamyl-phosphate reductase (359 aa).

Residue Cys162 is part of the active site.

Belongs to the NAGSA dehydrogenase family. Type 1 subfamily.

It is found in the cytoplasm. It catalyses the reaction N-acetyl-L-glutamate 5-semialdehyde + phosphate + NADP(+) = N-acetyl-L-glutamyl 5-phosphate + NADPH + H(+). It participates in amino-acid biosynthesis; L-arginine biosynthesis; N(2)-acetyl-L-ornithine from L-glutamate: step 3/4. Its function is as follows. Catalyzes the NADPH-dependent reduction of N-acetyl-5-glutamyl phosphate to yield N-acetyl-L-glutamate 5-semialdehyde. The chain is N-acetyl-gamma-glutamyl-phosphate reductase from Prochlorococcus marinus (strain NATL1A).